A 250-amino-acid chain; its full sequence is Proteasome subunit alpha type-7-A (250 aa).

Residue Lys62 forms a Glycyl lysine isopeptide (Lys-Gly) (interchain with G-Cter in ubiquitin) linkage.

The protein belongs to the peptidase T1A family. In terms of assembly, component of the 20S core complex of the 26S proteasome. The 26S proteasome is composed of a core protease (CP), known as the 20S proteasome, capped at one or both ends by the 19S regulatory particle (RP/PA700). The 20S proteasome core is composed of 28 subunits that are arranged in four stacked rings, resulting in a barrel-shaped structure. The two end rings are each formed by seven alpha subunits, and the two central rings are each formed by seven beta subunits. The catalytic chamber with the active sites is on the inside of the barrel. Interacts with KIN10 and KIN11 SnRK subunits, and with the SKP1A/ASK1 subunit of the SCF E3 ubiquitin ligase complex. Expressed in roots, leaves and flowers.

The protein resides in the cytoplasm. Its subcellular location is the nucleus. The proteasome is a multicatalytic proteinase complex which is characterized by its ability to cleave peptides with Arg, Phe, Tyr, Leu, and Glu adjacent to the leaving group at neutral or slightly basic pH. The proteasome has an ATP-dependent proteolytic activity. Mediates the association of the SCF(TIR1) E3 ubiquitin ligase complex with the proteasome. This chain is Proteasome subunit alpha type-7-A (PAD1), found in Arabidopsis thaliana (Mouse-ear cress).